A 1526-amino-acid polypeptide reads, in one-letter code: Myosin type-2 heavy chain 1 (1526 aa).

A Myosin N-terminal SH3-like domain is found at 22 to 73 (DDKRWVWISDPETAFTKAWIKEDLPDKKYVVRYNNSRDEKIVGEDEIDPVNP). The Myosin motor domain maps to 77-755 (DRVNDMAELT…VLAELEERRV (679 aa)). ATP is bound at residue 170 to 177 (GESGAGKT). Actin-binding stretches follow at residues 634-656 (LNQL…VPNE) and 734-748 (RIGV…GVLA). The IQ domain occupies 758 to 787 (LQRLMTMLQTRIRGFLQRKIFQKRLKDIQA). A coiled-coil region spans residues 875 to 1244 (ALDKEEILRR…SLTKQVNELS (370 aa)). S1044 carries the phosphoserine modification.

The protein belongs to the TRAFAC class myosin-kinesin ATPase superfamily. Myosin family. Binds to cdc4 and rlc1.

Its function is as follows. Required for cell division. It is a component of the cdc12 'spot', a structure thought to mark the site of septation. May work in conjunction with myo3. The chain is Myosin type-2 heavy chain 1 (myo2) from Schizosaccharomyces pombe (strain 972 / ATCC 24843) (Fission yeast).